A 184-amino-acid polypeptide reads, in one-letter code: Photosystem I assembly protein Ycf4 (184 aa).

2 helical membrane-spanning segments follow: residues 19 to 39 and 57 to 77; these read ISNF…LLVG and IIFF…LFIS.

Belongs to the Ycf4 family.

The protein resides in the plastid. It is found in the chloroplast thylakoid membrane. In terms of biological role, seems to be required for the assembly of the photosystem I complex. The chain is Photosystem I assembly protein Ycf4 from Cucumis sativus (Cucumber).